The primary structure comprises 384 residues: Succinate--CoA ligase [ADP-forming] subunit beta (384 aa).

The 234-residue stretch at K9–E242 folds into the ATP-grasp domain. Residues K45, G52 to G54, E98, L101, and E106 contribute to the ATP site. Positions 197 and 211 each coordinate Mg(2+). Substrate-binding positions include N262 and G319 to L321.

Belongs to the succinate/malate CoA ligase beta subunit family. In terms of assembly, heterotetramer of two alpha and two beta subunits. It depends on Mg(2+) as a cofactor.

The enzyme catalyses succinate + ATP + CoA = succinyl-CoA + ADP + phosphate. The catalysed reaction is GTP + succinate + CoA = succinyl-CoA + GDP + phosphate. It functions in the pathway carbohydrate metabolism; tricarboxylic acid cycle; succinate from succinyl-CoA (ligase route): step 1/1. In terms of biological role, succinyl-CoA synthetase functions in the citric acid cycle (TCA), coupling the hydrolysis of succinyl-CoA to the synthesis of either ATP or GTP and thus represents the only step of substrate-level phosphorylation in the TCA. The beta subunit provides nucleotide specificity of the enzyme and binds the substrate succinate, while the binding sites for coenzyme A and phosphate are found in the alpha subunit. This Solibacter usitatus (strain Ellin6076) protein is Succinate--CoA ligase [ADP-forming] subunit beta.